The primary structure comprises 515 residues: ATP synthase subunit alpha (515 aa).

An ATP-binding site is contributed by 169 to 176; sequence GDRQTGKT.

The protein belongs to the ATPase alpha/beta chains family. In terms of assembly, F-type ATPases have 2 components, CF(1) - the catalytic core - and CF(0) - the membrane proton channel. CF(1) has five subunits: alpha(3), beta(3), gamma(1), delta(1), epsilon(1). CF(0) has three main subunits: a(1), b(2) and c(9-12). The alpha and beta chains form an alternating ring which encloses part of the gamma chain. CF(1) is attached to CF(0) by a central stalk formed by the gamma and epsilon chains, while a peripheral stalk is formed by the delta and b chains.

The protein resides in the cell inner membrane. It catalyses the reaction ATP + H2O + 4 H(+)(in) = ADP + phosphate + 5 H(+)(out). Its function is as follows. Produces ATP from ADP in the presence of a proton gradient across the membrane. The alpha chain is a regulatory subunit. This is ATP synthase subunit alpha from Myxococcus xanthus.